The chain runs to 234 residues: MHFSPALKPGKLLKRYKRFLADVQLEDGTEITLHCPNTGSMRNCLFPGETVWFSTSNNPKRKYAHTWELMTTPTGGLIGIHSGNANALVEEALNKGIITELTGYDSLSREVKYGDENSRIDILLEAAQKPACYIEVKSCTLLEDGQGYFPDAVSLRGQKHLRELMHMASLGHRAVLLFVVQHTDIHSVAPAAHIDPEYANLLKKAILSGVEVLAYRCEISPDEIHLAQSCPVRV.

It belongs to the SfsA family.

This is Sugar fermentation stimulation protein homolog from Shewanella sp. (strain MR-7).